Reading from the N-terminus, the 483-residue chain is Serine hydroxymethyltransferase, cytosolic (483 aa).

K257 bears the N6-(pyridoxal phosphate)lysine mark.

The protein belongs to the SHMT family. Homotetramer. Identified in complex with ABRAXAS2 and the other subunits of the BRISC complex, at least composed of ABRAXAS2, BRCC3/BRCC36, BABAM2 and BABAM1/NBA1. Pyridoxal 5'-phosphate is required as a cofactor.

It is found in the cytoplasm. The catalysed reaction is (6R)-5,10-methylene-5,6,7,8-tetrahydrofolate + glycine + H2O = (6S)-5,6,7,8-tetrahydrofolate + L-serine. The protein operates within one-carbon metabolism; tetrahydrofolate interconversion. Functionally, interconversion of serine and glycine. The protein is Serine hydroxymethyltransferase, cytosolic (SHMT1) of Pongo abelii (Sumatran orangutan).